An 85-amino-acid chain; its full sequence is Large ribosomal subunit protein bL27 (85 aa).

It belongs to the bacterial ribosomal protein bL27 family.

The sequence is that of Large ribosomal subunit protein bL27 from Pseudomonas fluorescens (strain ATCC BAA-477 / NRRL B-23932 / Pf-5).